An 806-amino-acid polypeptide reads, in one-letter code: Lon protease 1 (806 aa).

Residues 31 to 235 (VPLIAVPSHP…KVLELIYEEL (205 aa)) form the Lon N-terminal domain. 389–396 (GPPGVGKT) is a binding site for ATP. A Lon proteolytic domain is found at 626 to 806 (AMYSGMVMGL…NMREVIKLLF (181 aa)). Residues S714 and K757 contribute to the active site.

This sequence belongs to the peptidase S16 family. As to quaternary structure, homohexamer. Organized in a ring with a central cavity.

It localises to the cytoplasm. It carries out the reaction Hydrolysis of proteins in presence of ATP.. In terms of biological role, ATP-dependent serine protease that mediates the selective degradation of mutant and abnormal proteins as well as certain short-lived regulatory proteins. Required for cellular homeostasis and for survival from DNA damage and developmental changes induced by stress. Degrades polypeptides processively to yield small peptide fragments that are 5 to 10 amino acids long. Binds to DNA in a double-stranded, site-specific manner. The polypeptide is Lon protease 1 (Borreliella burgdorferi (strain ATCC 35210 / DSM 4680 / CIP 102532 / B31) (Borrelia burgdorferi)).